Consider the following 306-residue polypeptide: 2-dehydro-3-deoxy-D-gluconate/2-dehydro-3-deoxy-phosphogluconate aldolase (306 aa).

Residues Thr61–Thr62, Tyr148–Tyr150, and Lys173–Thr175 each bind substrate. Catalysis depends on Lys173, which acts as the Schiff-base intermediate with substrate.

It belongs to the DapA family. KDPG aldolase subfamily. As to quaternary structure, homotetramer; dimer of dimers.

It catalyses the reaction 2-dehydro-3-deoxy-6-phospho-D-gluconate = D-glyceraldehyde 3-phosphate + pyruvate. The enzyme catalyses 2-dehydro-3-deoxy-D-gluconate = D-glyceraldehyde + pyruvate. It participates in carbohydrate acid metabolism; 2-dehydro-3-deoxy-D-gluconate degradation; D-glyceraldehyde 3-phosphate and pyruvate from 2-dehydro-3-deoxy-D-gluconate: step 2/2. Involved in the degradation of glucose via the Entner-Doudoroff pathway. Catalyzes the reversible cleavage of 2-keto-3-deoxy-6-phosphogluconate (KDPG) and 2-keto-3-deoxygluconate (KDG) forming pyruvate and glyceraldehyde 3-phosphate or glyceraldehyde, respectively. It is not able to use 2-keto-3-deoxy-6-phosphogalactonate (KDPGal) and 2-keto-3-deoxygalactonate (KDGal) as substrate. The sequence is that of 2-dehydro-3-deoxy-D-gluconate/2-dehydro-3-deoxy-phosphogluconate aldolase (kdgA) from Thermoproteus tenax.